The sequence spans 140 residues: Phosphoribosyl-AMP cyclohydrolase (140 aa).

Asp78 is a binding site for Mg(2+). A Zn(2+)-binding site is contributed by Cys79. Positions 80 and 82 each coordinate Mg(2+). Zn(2+) contacts are provided by Cys96 and Cys103.

The protein belongs to the PRA-CH family. Homodimer. Mg(2+) serves as cofactor. The cofactor is Zn(2+).

Its subcellular location is the cytoplasm. It carries out the reaction 1-(5-phospho-beta-D-ribosyl)-5'-AMP + H2O = 1-(5-phospho-beta-D-ribosyl)-5-[(5-phospho-beta-D-ribosylamino)methylideneamino]imidazole-4-carboxamide. Its pathway is amino-acid biosynthesis; L-histidine biosynthesis; L-histidine from 5-phospho-alpha-D-ribose 1-diphosphate: step 3/9. In terms of biological role, catalyzes the hydrolysis of the adenine ring of phosphoribosyl-AMP. The sequence is that of Phosphoribosyl-AMP cyclohydrolase from Ralstonia pickettii (strain 12J).